The sequence spans 700 residues: MFNIRNTQPSVSMQAIAGAAAPEASPEEIVWEKIQVFFPQENYEEAQQCLAELCHPARGMLPDHISSQFARLKALTFPAWEENIQCNRDGINQFCILDAGSKEILSITLDDAGNYTVNCQGYSEAHDFIMDTEPGEECTEFAEGASGTSLRPATTVSQKAAEYDAVWSKWERDAPAGESPGRAAVVQEMRDCLNNGNPVLNVGASGLTTLPDRLPPHITTLVIPDNNLTSLPELPEGLRELEVSGNLQLTSLPSLPQGLQKLWAYNNWLASLPTLPPGLGDLAVSNNQLTSLPEMPPALRELRVSGNNLTSLPALPSGLQKLWAYNNRLTSLPEMSPGLQELDVSHNQLTRLPQSLTGLSSAARVYLDGNPLSVRTLQALRDIIGHSGIRIHFDMAGPSVPREARALHLAVADWLTSAREGEAAQADRWQAFGLEDNAAAFSLVLDRLRETENFKKDAGFKAQISSWLTQLAEDAALRAKTFAMATEATSTCEDRVTHALHQMNNVQLVHNAEKGEYDNNLQGLVSTGREMFRLATLEQIAREKAGTLALVDDVEVYLAFQNKLKESLELTSVTSEMRFFDVSGVTVSDLQAAELQVKTAENSGFSKWILQWGPLHSVLERKVPERFNALREKQISDYEDTYRKLYDEVLKSSGLVDDTDAERTIGVSAMDSAKKEFLDGLRALVDEVLGSYLTARWRLN.

An interaction with target proteins region spans residues 1–395; that stretch reads MFNIRNTQPS…HSGIRIHFDM (395 aa). 8 LRR repeats span residues 217–238, 239–257, 258–279, 280–297, 298–319, 320–337, 338–360, and 361–381; these read HITT…PEGL, RELE…SLPQ, GLQK…PPGL, GDLA…EMPP, ALRE…PSGL, QKLW…EMSP, GLQE…TGLS, and SAAR…QALR. The tract at residues 396 to 403 is linker; that stretch reads AGPSVPRE. The interval 404 to 700 is E3 ubiquitin-protein ligase catalytic domain; the sequence is ARALHLAVAD…SYLTARWRLN (297 aa). In terms of domain architecture, NEL spans 406 to 700; that stretch reads ALHLAVADWL…SYLTARWRLN (295 aa). Residue Cys492 is the Glycyl thioester intermediate of the active site.

This sequence belongs to the LRR-containing bacterial E3 ligase family. As to quaternary structure, interacts (via leucine-rich repeat region) with host PKN1 (via the second REM repeat). Ubiquitinated in the presence of host E1 ubiquitin-activating enzyme, E2 ubiquitin-conjugating enzyme and ubiquitin.

It is found in the secreted. It localises to the host cytoplasm. Its subcellular location is the host nucleus. The enzyme catalyses S-ubiquitinyl-[E2 ubiquitin-conjugating enzyme]-L-cysteine + [acceptor protein]-L-lysine = [E2 ubiquitin-conjugating enzyme]-L-cysteine + N(6)-ubiquitinyl-[acceptor protein]-L-lysine.. Exists in an autoinhibited state in the absence of substrate protein, due to interactions of the leucine-rich repeat domain with the catalytic domain. Is activated upon binding to a substrate protein. Functionally, effector proteins function to alter host cell physiology and promote bacterial survival in host tissues. This protein is an E3 ubiquitin-protein ligase that interferes with the host's ubiquitination pathway and targets host proteins for proteasomal degradation. Can ubiquitinate ubiquitin, giving rise to polyubiquitin chains (in vitro). Polyubiquitinates host PKN1, leading to its proteasomal degradation. Down-modulates production of host pro-inflammatory cytokines by inhibiting NF-kappa-B-dependent gene expression; this depends only partially on its E3 ubiquitin-protein ligase activity. This Salmonella typhimurium (strain 14028s / SGSC 2262) protein is E3 ubiquitin-protein ligase SspH1 (sspH1).